Consider the following 158-residue polypeptide: 3-hydroxyacyl-[acyl-carrier-protein] dehydratase FabZ (158 aa).

H57 is an active-site residue.

This sequence belongs to the thioester dehydratase family. FabZ subfamily.

It is found in the cytoplasm. It carries out the reaction a (3R)-hydroxyacyl-[ACP] = a (2E)-enoyl-[ACP] + H2O. In terms of biological role, involved in unsaturated fatty acids biosynthesis. Catalyzes the dehydration of short chain beta-hydroxyacyl-ACPs and long chain saturated and unsaturated beta-hydroxyacyl-ACPs. The chain is 3-hydroxyacyl-[acyl-carrier-protein] dehydratase FabZ from Anaeromyxobacter sp. (strain Fw109-5).